A 216-amino-acid chain; its full sequence is Ribosome maturation factor RimP (216 aa).

Belongs to the RimP family.

Its subcellular location is the cytoplasm. In terms of biological role, required for maturation of 30S ribosomal subunits. The polypeptide is Ribosome maturation factor RimP (Bartonella quintana (strain Toulouse) (Rochalimaea quintana)).